An 89-amino-acid polypeptide reads, in one-letter code: Small ribosomal subunit protein uS15 (89 aa).

It belongs to the universal ribosomal protein uS15 family. As to quaternary structure, part of the 30S ribosomal subunit. Forms a bridge to the 50S subunit in the 70S ribosome, contacting the 23S rRNA.

In terms of biological role, one of the primary rRNA binding proteins, it binds directly to 16S rRNA where it helps nucleate assembly of the platform of the 30S subunit by binding and bridging several RNA helices of the 16S rRNA. Its function is as follows. Forms an intersubunit bridge (bridge B4) with the 23S rRNA of the 50S subunit in the ribosome. The polypeptide is Small ribosomal subunit protein uS15 (Chlorobium phaeovibrioides (strain DSM 265 / 1930) (Prosthecochloris vibrioformis (strain DSM 265))).